Consider the following 116-residue polypeptide: Histone H2B (116 aa).

Basic residues predominate over residues 1–11; that stretch reads TSGKAAKKAGK. Positions 1 to 25 are disordered; the sequence is TSGKAAKKAGKAQKSITKGDKKKRK. Residues K4, K11, and K14 each carry the N6-acetyllysine modification. O-linked (GlcNAc) serine glycosylation is present at S103. K111 participates in a covalent cross-link: Glycyl lysine isopeptide (Lys-Gly) (interchain with G-Cter in ubiquitin).

In terms of assembly, the nucleosome is a histone octamer containing two molecules each of H2A, H2B, H3 and H4 assembled in one H3-H4 heterotetramer and two H2A-H2B heterodimers. The octamer wraps approximately 147 bp of DNA. Monoubiquitination gives a specific tag for epigenetic transcriptional activation and is also prerequisite for histone H3 'Lys-4' and 'Lys-79' methylation. Post-translationally, glcNAcylation at Ser-103 promotes monoubiquitination of Lys-111. It fluctuates in response to extracellular glucose, and associates with transcribed genes.

The protein resides in the nucleus. Its subcellular location is the chromosome. Functionally, core component of nucleosome. Nucleosomes wrap and compact DNA into chromatin, limiting DNA accessibility to the cellular machineries which require DNA as a template. Histones thereby play a central role in transcription regulation, DNA repair, DNA replication and chromosomal stability. DNA accessibility is regulated via a complex set of post-translational modifications of histones, also called histone code, and nucleosome remodeling. In terms of biological role, a mixture of histones H2B and H4 has antimicrobial activity against the Gram-positive bacterium M.luteus. The chain is Histone H2B from Penaeus vannamei (Whiteleg shrimp).